Here is a 266-residue protein sequence, read N- to C-terminus: uncharacterized protein (266 aa).

It belongs to the chlamydial CPn_0087/CT_309/TC_0583 family.

This is an uncharacterized protein from Chlamydia trachomatis serovar D (strain ATCC VR-885 / DSM 19411 / UW-3/Cx).